The sequence spans 106 residues: uncharacterized protein (106 aa).

It belongs to the csb family.

This is an uncharacterized protein from Dictyostelium discoideum (Social amoeba).